We begin with the raw amino-acid sequence, 328 residues long: Malate dehydrogenase (328 aa).

13–19 (GAAGQIS) is a binding site for NAD(+). Residues Arg-94 and Arg-100 each contribute to the substrate site. NAD(+) is bound by residues Asn-107, Gln-114, and 131–133 (VGN). Substrate contacts are provided by Asn-133 and Arg-164. His-189 (proton acceptor) is an active-site residue.

The protein belongs to the LDH/MDH superfamily. MDH type 2 family.

It carries out the reaction (S)-malate + NAD(+) = oxaloacetate + NADH + H(+). Catalyzes the reversible oxidation of malate to oxaloacetate. The protein is Malate dehydrogenase of Alcanivorax borkumensis (strain ATCC 700651 / DSM 11573 / NCIMB 13689 / SK2).